A 221-amino-acid polypeptide reads, in one-letter code: Deep sea actinoporin Cjtox II (221 aa).

The signal sequence occupies residues 1 to 19; that stretch reads MNRLIIVCLVAAMIYSTIA. A propeptide spanning residues 20–42 is cleaved from the precursor; it reads LPMKEDISNDERPISVNEEPVKK. Phosphocholine is bound by residues Ser96, Val129, Ser147, Pro149, Tyr175, Tyr179, and Tyr180. Positions 147–162 are trp-rich region, which is important for the binding to lipid membrane; the sequence is SVPYDYNWYENWWNIK. Residues 186–188 carry the Cell attachment site, crucial for protein stability motif; the sequence is KGD.

It belongs to the actinoporin family. Sea anemone subfamily. Octamer or nonamer in membranes. Monomer in the soluble state. In terms of tissue distribution, expressed in actinopharynx and in gastric filaments. Is not expressed in tentacles.

The protein localises to the secreted. It localises to the nematocyst. Its subcellular location is the target cell membrane. In terms of biological role, may be involved in digestion of prey. Pore-forming protein that forms cations-selective hydrophilic pores of around 1 nm and causes cytolysis. Pore formation is a multi-step process that involves specific recognition of membrane sphingomyelin (but neither cholesterol nor phosphatidylcholine) using aromatic rich region and adjacent phosphocholine (POC) binding site, firm binding to the membrane (mainly driven by hydrophobic interactions) accompanied by the transfer of the N-terminal region to the lipid-water interface and finally pore formation after oligomerization of monomers. Shows hemolytic activity on equine erythrocytes. Hemolysis is highly inhibited in presence of sphingomyelin, suggesting that this protein targets sphingomyelin. This Cribrinopsis japonica (Deep-sea anemone) protein is Deep sea actinoporin Cjtox II.